Reading from the N-terminus, the 335-residue chain is 3-ketodihydrosphingosine reductase TSC10 (335 aa).

Residues G42, S44, S45, and G46 each coordinate NADPH. The GXSXG signature appears at 42–46; sequence GGSSG. L47 is a binding site for NADP(+). R67, D68, K71, D95, and L96 together coordinate NADPH. D95 contacts NADP(+). Positions 190, 194, and 223 each coordinate NADP(+). Y190 functions as the Proton acceptor in the catalytic mechanism. The Lowers pKa of active site Tyr role is filled by K194. The helical transmembrane segment at 288-308 threads the bilayer; the sequence is TNNFLLDTLWLIVSSVGVPIW.

This sequence belongs to the short-chain dehydrogenases/reductases (SDR) family.

The protein resides in the endoplasmic reticulum membrane. The enzyme catalyses sphinganine + NADP(+) = 3-oxosphinganine + NADPH + H(+). It participates in lipid metabolism; sphingolipid metabolism. In terms of biological role, catalyzes the reduction of 3'-oxosphinganine (3-ketodihydrosphingosine/KDS) to sphinganine (dihydrosphingosine/DHS), the second step of de novo sphingolipid biosynthesis. The sequence is that of 3-ketodihydrosphingosine reductase TSC10 (TSC10) from Cryptococcus neoformans var. neoformans serotype D (strain B-3501A) (Filobasidiella neoformans).